Reading from the N-terminus, the 617-residue chain is Secretogranin-2 (617 aa).

Positions Met1–Phe30 are cleaved as a signal peptide. Tyr153 bears the Sulfotyrosine mark. Ser176 and Ser270 each carry phosphoserine. 2 stretches are compositionally biased toward basic and acidic residues: residues Thr261 to Arg286 and Glu295 to Glu307. The disordered stretch occupies residues Thr261 to Glu307. Ser434, Ser532, Ser555, and Ser556 each carry phosphoserine.

The protein belongs to the chromogranin/secretogranin protein family. In terms of assembly, interacts with Secretogranin III/SCG3.

The protein localises to the secreted. Its function is as follows. Neuroendocrine protein of the granin family that regulates the biogenesis of secretory granules. This Mus musculus (Mouse) protein is Secretogranin-2 (Scg2).